Consider the following 306-residue polypeptide: tRNA dimethylallyltransferase (306 aa).

9 to 16 contributes to the ATP binding site; that stretch reads GPTAVGKT. A substrate-binding site is contributed by 11-16; sequence TAVGKT. The interval 34–37 is interaction with substrate tRNA; that stretch reads DSRQ.

Belongs to the IPP transferase family. Monomer. The cofactor is Mg(2+).

The catalysed reaction is adenosine(37) in tRNA + dimethylallyl diphosphate = N(6)-dimethylallyladenosine(37) in tRNA + diphosphate. Catalyzes the transfer of a dimethylallyl group onto the adenine at position 37 in tRNAs that read codons beginning with uridine, leading to the formation of N6-(dimethylallyl)adenosine (i(6)A). The protein is tRNA dimethylallyltransferase of Roseiflexus castenholzii (strain DSM 13941 / HLO8).